A 206-amino-acid chain; its full sequence is GTP cyclohydrolase 1 (206 aa).

Residues Cys97, His100, and Cys168 each coordinate Zn(2+).

The protein belongs to the GTP cyclohydrolase I family. Toroid-shaped homodecamer, composed of two pentamers of five dimers.

The enzyme catalyses GTP + H2O = 7,8-dihydroneopterin 3'-triphosphate + formate + H(+). The protein operates within cofactor biosynthesis; 7,8-dihydroneopterin triphosphate biosynthesis; 7,8-dihydroneopterin triphosphate from GTP: step 1/1. This is GTP cyclohydrolase 1 from Chromobacterium violaceum (strain ATCC 12472 / DSM 30191 / JCM 1249 / CCUG 213 / NBRC 12614 / NCIMB 9131 / NCTC 9757 / MK).